Reading from the N-terminus, the 506-residue chain is Kynurenine 3-monooxygenase (506 aa).

The interval 153-174 (QETSLLPGEESEKDKKQNTEDE) is disordered. The span at 162 to 171 (ESEKDKKQNT) shows a compositional bias: basic and acidic residues.

The protein belongs to the aromatic-ring hydroxylase family. KMO subfamily. It depends on FAD as a cofactor.

The protein resides in the mitochondrion outer membrane. The catalysed reaction is L-kynurenine + NADPH + O2 + H(+) = 3-hydroxy-L-kynurenine + NADP(+) + H2O. The protein operates within cofactor biosynthesis; NAD(+) biosynthesis; quinolinate from L-kynurenine: step 1/3. Its function is as follows. Catalyzes the hydroxylation of L-kynurenine (L-Kyn) to form 3-hydroxy-L-kynurenine (L-3OHKyn). Required for synthesis of quinolinic acid. The chain is Kynurenine 3-monooxygenase from Cryptococcus neoformans var. neoformans serotype D (strain JEC21 / ATCC MYA-565) (Filobasidiella neoformans).